A 454-amino-acid polypeptide reads, in one-letter code: tRNA modification GTPase MnmE (454 aa).

(6S)-5-formyl-5,6,7,8-tetrahydrofolate-binding residues include arginine 23, glutamate 80, and lysine 120. Positions 216–377 (GMKVVIAGRP…LRDHLKQSMG (162 aa)) constitute a TrmE-type G domain. Asparagine 226 is a K(+) binding site. GTP-binding positions include 226-231 (NAGKSS), 245-251 (TDIAGTT), 270-273 (DTAG), 335-338 (NKAD), and 358-360 (SAR). Residue serine 230 coordinates Mg(2+). Residues threonine 245, isoleucine 247, and threonine 250 each contribute to the K(+) site. A Mg(2+)-binding site is contributed by threonine 251. Lysine 454 lines the (6S)-5-formyl-5,6,7,8-tetrahydrofolate pocket.

Belongs to the TRAFAC class TrmE-Era-EngA-EngB-Septin-like GTPase superfamily. TrmE GTPase family. Homodimer. Heterotetramer of two MnmE and two MnmG subunits. K(+) is required as a cofactor.

It is found in the cytoplasm. Its function is as follows. Exhibits a very high intrinsic GTPase hydrolysis rate. Involved in the addition of a carboxymethylaminomethyl (cmnm) group at the wobble position (U34) of certain tRNAs, forming tRNA-cmnm(5)s(2)U34. This chain is tRNA modification GTPase MnmE, found in Pectobacterium carotovorum subsp. carotovorum (strain PC1).